The chain runs to 258 residues: UPF0246 protein CGSHiGG_08495 (258 aa).

It belongs to the UPF0246 family.

The sequence is that of UPF0246 protein CGSHiGG_08495 from Haemophilus influenzae (strain PittGG).